The primary structure comprises 472 residues: 3-isopropylmalate dehydratase large subunit (472 aa).

Residues C351, C412, and C415 each contribute to the [4Fe-4S] cluster site.

Belongs to the aconitase/IPM isomerase family. LeuC type 1 subfamily. As to quaternary structure, heterodimer of LeuC and LeuD. [4Fe-4S] cluster serves as cofactor.

It catalyses the reaction (2R,3S)-3-isopropylmalate = (2S)-2-isopropylmalate. The protein operates within amino-acid biosynthesis; L-leucine biosynthesis; L-leucine from 3-methyl-2-oxobutanoate: step 2/4. Its function is as follows. Catalyzes the isomerization between 2-isopropylmalate and 3-isopropylmalate, via the formation of 2-isopropylmaleate. This is 3-isopropylmalate dehydratase large subunit from Marinobacter nauticus (strain ATCC 700491 / DSM 11845 / VT8) (Marinobacter aquaeolei).